A 222-amino-acid chain; its full sequence is RING finger protein 141 (222 aa).

An RING-type zinc finger spans residues 147–184 (CCICMDGKADLILPCAHSFCQKCIDKWSGQSRNCPVCR).

The protein is RING finger protein 141 (rnf141) of Danio rerio (Zebrafish).